Here is a 530-residue protein sequence, read N- to C-terminus: Type II methyltransferase M.MjaII (530 aa).

This sequence belongs to the N(4)/N(6)-methyltransferase family. N(4) subfamily.

The catalysed reaction is a 2'-deoxycytidine in DNA + S-adenosyl-L-methionine = an N(4)-methyl-2'-deoxycytidine in DNA + S-adenosyl-L-homocysteine + H(+). Its function is as follows. An alpha subtype methylase that recognizes the double-stranded sequence 5'-GGNCC-3', methylates C-5 on both strands, and protects the DNA from cleavage by the MjaII endonuclease. The chain is Type II methyltransferase M.MjaII (mjaIIM) from Methanocaldococcus jannaschii (strain ATCC 43067 / DSM 2661 / JAL-1 / JCM 10045 / NBRC 100440) (Methanococcus jannaschii).